Consider the following 407-residue polypeptide: Indoleamine 2,3-dioxygenase 2 (407 aa).

His347 contacts heme.

The protein belongs to the indoleamine 2,3-dioxygenase family. Heme serves as cofactor. As to expression, detected in liver, small intestine, spleen, placenta, thymus, lung, brain, kidney, and colon. Also expressed at low level in testis and thyroid. Not expressed in the majority of human tumor samples (&gt;99%).

It catalyses the reaction L-tryptophan + O2 = N-formyl-L-kynurenine. Its pathway is amino-acid degradation; L-tryptophan degradation via kynurenine pathway; L-kynurenine from L-tryptophan: step 1/2. Activity is inhibited by D-1MT (1-methyl-D-tryptophan) and MTH-trp (methylthiohydantoin-DL-tryptophan) but not L-1MT (1-methyl-L-tryptophan). Functionally, catalyzes the first and rate limiting step of the catabolism of the essential amino acid tryptophan along the kynurenine pathway. Involved in immune regulation. May not play a significant role in tryptophan-related tumoral resistance. This chain is Indoleamine 2,3-dioxygenase 2, found in Homo sapiens (Human).